The sequence spans 195 residues: Probable GTP-binding protein EngB (195 aa).

The region spanning 24–195 (ELPEIALAGR…EAWDAILEKL (172 aa)) is the EngB-type G domain. GTP is bound by residues 32–39 (GRSNVGKS), 59–63 (GKTQL), 77–80 (DVPG), 144–147 (TKAD), and 176–178 (FSS). Residues S39 and T61 each coordinate Mg(2+).

Belongs to the TRAFAC class TrmE-Era-EngA-EngB-Septin-like GTPase superfamily. EngB GTPase family. It depends on Mg(2+) as a cofactor.

Functionally, necessary for normal cell division and for the maintenance of normal septation. This is Probable GTP-binding protein EngB from Streptococcus pneumoniae serotype 4 (strain ATCC BAA-334 / TIGR4).